We begin with the raw amino-acid sequence, 24 residues long: Unknown protein 3 (24 aa).

In Pseudotsuga menziesii (Douglas-fir), this protein is Unknown protein 3.